The chain runs to 266 residues: MASPGASRGASAATAAAASPRPPQGRSSRRDKYSVLLPTYNERENLPLIVWLLVKSFSESSINYEIIIIDDGSPDGTREVAEQLEKIYGPDRILLRPREKKLGLGTAYIHGIKHATGNYVIIMDADLSHHPKFIPEFIRKQKEGNFDIVSGTRYKGNGGVYGWDLKRKIISRGANFITQILLRPGASDLTGSFRLYRKEVLQKLIEKCVSKGYVFQMEMIVRARQLNYTIGEVPISFVDRVYGESKLGGNEIVSFLKGLLTLFATT.

The segment covering 1–19 (MASPGASRGASAATAAAAS) has biased composition (low complexity). Positions 1–31 (MASPGASRGASAATAAAASPRPPQGRSSRRD) are disordered. Position 2 is an N-acetylalanine (Ala-2). Ser-3 carries the phosphoserine modification. GDP-alpha-D-mannose is bound by residues Pro-38, Tyr-40, Glu-42, Ile-69, Asp-71, Asp-124, Ala-125, Asp-126, Arg-153, Arg-240, and Lys-246. Asp-126 is a binding site for Mg(2+). Asp-126 is a Mn(2+) binding site.

The protein belongs to the glycosyltransferase 2 family. As to quaternary structure, component of the dolichol-phosphate mannose (DPM) synthase complex composed of DPM1, DPM2 and DPM3; within the complex, directly interacts with DPM3. This interaction may stabilize DPM1. It depends on Mg(2+) as a cofactor. Requires Mn(2+) as cofactor. The cofactor is Ca(2+).

The protein localises to the endoplasmic reticulum. The enzyme catalyses a di-trans,poly-cis-dolichyl phosphate + GDP-alpha-D-mannose = a di-trans,poly-cis-dolichyl beta-D-mannosyl phosphate + GDP. It functions in the pathway protein modification; protein glycosylation. Its function is as follows. Transfers mannose from GDP-mannose to dolichol monophosphate to form dolichol phosphate mannose (Dol-P-Man) which is the mannosyl donor in pathways leading to N-glycosylation, glycosyl phosphatidylinositol membrane anchoring, and O-mannosylation of proteins; catalytic subunit of the dolichol-phosphate mannose (DPM) synthase complex. This is Dolichol-phosphate mannosyltransferase subunit 1 (DPM1) from Cricetulus griseus (Chinese hamster).